A 176-amino-acid polypeptide reads, in one-letter code: MSRIGLKTIEVPDSVTVTKEGDNITVKGPKGELTRYFDPKITFEQNDGEINFSRSSESDKALHGTERANLASMIEGVLNGYKKTLKLIGVGYRAQAQGNKITLNVGYSHPVVLTAPEGVSVKATSATDVEVEGVSKQDVGQFAAEIRAVRPPEPYKGKGIRYVDEYVRRKEGKTGK.

The protein belongs to the universal ribosomal protein uL6 family. In terms of assembly, part of the 50S ribosomal subunit.

Its function is as follows. This protein binds to the 23S rRNA, and is important in its secondary structure. It is located near the subunit interface in the base of the L7/L12 stalk, and near the tRNA binding site of the peptidyltransferase center. The protein is Large ribosomal subunit protein uL6 of Lactobacillus acidophilus (strain ATCC 700396 / NCK56 / N2 / NCFM).